A 148-amino-acid chain; its full sequence is Glutamyl-tRNA(Gln) amidotransferase subunit C, mitochondrial (148 aa).

Belongs to the GatC family. As to quaternary structure, subunit of the heterotrimeric GatCAB amidotransferase (AdT) complex, composed of A, B and C subunits.

The protein localises to the mitochondrion. The catalysed reaction is L-glutamyl-tRNA(Gln) + L-glutamine + ATP + H2O = L-glutaminyl-tRNA(Gln) + L-glutamate + ADP + phosphate + H(+). Its function is as follows. Allows the formation of correctly charged Gln-tRNA(Gln) through the transamidation of misacylated Glu-tRNA(Gln) in the mitochondria. The reaction takes place in the presence of glutamine and ATP through an activated gamma-phospho-Glu-tRNA(Gln). The chain is Glutamyl-tRNA(Gln) amidotransferase subunit C, mitochondrial from Drosophila yakuba (Fruit fly).